The chain runs to 418 residues: MAKLLQQPPKFLRAEWQIANKNQYHRAEAQRSRSERLVAESQRLVDEIEKTTRKSQSDVNKKLEQRLEEVRFWKKELDDKLEQLVYATEDLLLYQTRLQKALESFKEPLHITEKCLEYREKRVGIDLVHDEVEQELIKEHEIIRGVMTLLTRTLEETCEQIRLNRSAKYNLEKDLRDKFTAITIDDICFSLNNNSPNIKYSENVVRVEPNSVSLEDWLDFSNTNVEKADKQRNNSLTLKALVDRILFQTASDLRRQCDVVDTAFKNGLKETKDARDKLALHLDKVMEEIASQEKNIVVLEKAILDQEGPAKVAHTRLETRTHRPNVELCRDVAQYRLIKEVDEITHNVARLKETLAQAHVELKGLNRRQLALQEEIQIKENTIYIDEVLCVPMRKSIPPRDGDDHGEWAGGSHPEAVC.

Coiled-coil stretches lie at residues 21-84, 268-308, and 336-383; these read KNQY…LEQL, LKET…DQEG, and RLIK…ENTI. Residues 399-418 form a disordered region; it reads PRDGDDHGEWAGGSHPEAVC.

This sequence belongs to the tektin family. As to quaternary structure, microtubule inner protein component of sperm flagellar doublet microtubules. Post-translationally, ubiquitinated, leading to its degradation. Deubiquitinated by USP16, promoting its stability. Expressed in trachea multiciliated cells.

It is found in the cytoplasm. It localises to the cytoskeleton. The protein localises to the cilium axoneme. The protein resides in the flagellum axoneme. Functionally, microtubule inner protein (MIP) part of the dynein-decorated doublet microtubules (DMTs) in cilia and flagellar axoneme. Forms filamentous polymers in the walls of ciliary and flagellar microtubules. The protein is Tektin-1 (TEKT1) of Bos taurus (Bovine).